A 652-amino-acid chain; its full sequence is Probable export ATP-binding/permease protein PFL_2149 (652 aa).

The region spanning 6 to 244 (LHLTGISRSF…APSEPPVSVR (239 aa)) is the ABC transporter domain. An ATP-binding site is contributed by 42-49 (GASGSGKS). 5 helical membrane passes run 251 to 271 (LVAS…ALVS), 277 to 297 (LLTM…VAIG), 525 to 545 (LALL…IGVM), 586 to 606 (IGGA…TLFI), and 615 to 635 (MGSI…FGFV).

Belongs to the ABC transporter superfamily. Macrolide exporter (TC 3.A.1.122) family. Probably part of a tripartite efflux system, which is composed of an inner membrane transporter, a periplasmic membrane fusion protein, and an outer membrane component.

Its subcellular location is the cell inner membrane. In terms of biological role, probably part of a tripartite efflux system. The protein is Probable export ATP-binding/permease protein PFL_2149 of Pseudomonas fluorescens (strain ATCC BAA-477 / NRRL B-23932 / Pf-5).